The sequence spans 385 residues: Aspartate carbamoyltransferase 2, chloroplastic (385 aa).

A chloroplast-targeting transit peptide spans 1-30 (MTASSSLFSCSMHMEVLTPKISKWPKNFVS). Positions 131 and 132 each coordinate carbamoyl phosphate. Residues R131 and T132 each contribute to the UMP site. K161 is an L-aspartate binding site. Carbamoyl phosphate contacts are provided by R182, H210, and Q213. UMP is bound by residues R182 and H210. Residues R243 and R305 each contribute to the UMP site. The L-aspartate site is built by R243 and R305. Residues L345 and P346 each contribute to the carbamoyl phosphate site.

It belongs to the aspartate/ornithine carbamoyltransferase superfamily. ATCase family. In terms of assembly, homotrimer.

It localises to the plastid. It is found in the chloroplast. The catalysed reaction is carbamoyl phosphate + L-aspartate = N-carbamoyl-L-aspartate + phosphate + H(+). The protein operates within pyrimidine metabolism; UMP biosynthesis via de novo pathway; (S)-dihydroorotate from bicarbonate: step 2/3. Its activity is regulated as follows. Feedback inhibited by UMP. Functionally, catalyzes the condensation of carbamoyl phosphate and aspartate to form carbamoyl aspartate and inorganic phosphate, the committed step in the de novo pyrimidine nucleotide biosynthesis pathway. The chain is Aspartate carbamoyltransferase 2, chloroplastic (PYRB2) from Pisum sativum (Garden pea).